The sequence spans 65 residues: Large ribosomal subunit protein bL31 (65 aa).

Residues C16, C18, C36, and C39 each contribute to the Zn(2+) site.

The protein belongs to the bacterial ribosomal protein bL31 family. Type A subfamily. As to quaternary structure, part of the 50S ribosomal subunit. Zn(2+) serves as cofactor.

Its function is as follows. Binds the 23S rRNA. This is Large ribosomal subunit protein bL31 from Geotalea daltonii (strain DSM 22248 / JCM 15807 / FRC-32) (Geobacter daltonii).